Here is an 87-residue protein sequence, read N- to C-terminus: Elongation factor Ts, chloroplastic (87 aa).

This sequence belongs to the EF-Ts family.

It localises to the plastid. The protein resides in the chloroplast. Associates with the EF-Tu.GDP complex and induces the exchange of GDP to GTP. It remains bound to the aminoacyl-tRNA.EF-Tu.GTP complex up to the GTP hydrolysis stage on the ribosome. This chain is Elongation factor Ts, chloroplastic (tsf), found in Antithamnion sp. (Red alga).